The chain runs to 432 residues: EF-hand calcium-binding domain-containing protein 3 (432 aa).

2 consecutive EF-hand domains span residues 45 to 80 and 81 to 116; these read AQLEAFRNAYNFFTKDRTGCIDSHGLMSTVAKLGMN and LNAYDIYNELKCADRDRDGKINFSDFIDVLTDKKLF. Positions 94, 96, 98, 100, and 105 each coordinate Ca(2+). Y273 is modified (phosphotyrosine). The segment at 394-432 is disordered; that stretch reads NVNKTSPSNSGLSSPSDLSESDPETGRKRKRKSSRGFRQ. The span at 399 to 411 shows a compositional bias: low complexity; it reads SPSNSGLSSPSDL. Positions 420 to 432 are enriched in basic residues; it reads RKRKRKSSRGFRQ.

This chain is EF-hand calcium-binding domain-containing protein 3 (Efcab3), found in Rattus norvegicus (Rat).